Reading from the N-terminus, the 132-residue chain is Small ribosomal subunit protein uS13 (132 aa).

A compositionally biased stretch (basic residues) spans 101 to 125 (RGLPVRGQRTKTNARTRKGPRKTVA). A disordered region spans residues 101–132 (RGLPVRGQRTKTNARTRKGPRKTVANKKIETR).

The protein belongs to the universal ribosomal protein uS13 family. In terms of assembly, part of the 30S ribosomal subunit. Forms a loose heterodimer with protein S19. Forms two bridges to the 50S subunit in the 70S ribosome.

Located at the top of the head of the 30S subunit, it contacts several helices of the 16S rRNA. In the 70S ribosome it contacts the 23S rRNA (bridge B1a) and protein L5 of the 50S subunit (bridge B1b), connecting the 2 subunits; these bridges are implicated in subunit movement. Contacts the tRNAs in the A and P-sites. The sequence is that of Small ribosomal subunit protein uS13 from Ureaplasma parvum serovar 3 (strain ATCC 27815 / 27 / NCTC 11736).